Reading from the N-terminus, the 296-residue chain is Phosphatidylglycerol--prolipoprotein diacylglyceryl transferase (296 aa).

Helical transmembrane passes span 17–37 (LAVR…IVVG), 59–79 (MMFY…VLFY), and 97–117 (GGMS…LFAW). A 1,2-diacyl-sn-glycero-3-phospho-(1'-sn-glycerol) is bound at residue Arg142. 2 consecutive transmembrane segments (helical) span residues 230–250 (MGAI…TVEF) and 265–285 (LSMG…MMIW).

It belongs to the Lgt family.

The protein resides in the cell inner membrane. It carries out the reaction L-cysteinyl-[prolipoprotein] + a 1,2-diacyl-sn-glycero-3-phospho-(1'-sn-glycerol) = an S-1,2-diacyl-sn-glyceryl-L-cysteinyl-[prolipoprotein] + sn-glycerol 1-phosphate + H(+). It participates in protein modification; lipoprotein biosynthesis (diacylglyceryl transfer). In terms of biological role, catalyzes the transfer of the diacylglyceryl group from phosphatidylglycerol to the sulfhydryl group of the N-terminal cysteine of a prolipoprotein, the first step in the formation of mature lipoproteins. This chain is Phosphatidylglycerol--prolipoprotein diacylglyceryl transferase, found in Burkholderia thailandensis (strain ATCC 700388 / DSM 13276 / CCUG 48851 / CIP 106301 / E264).